Consider the following 584-residue polypeptide: (+)-larreatricin hydroxylase, chloroplastic (584 aa).

The transit peptide at 1-32 (MASLSSQSKLLATPYSFPYHTKPSRVSLRRVS) directs the protein to the chloroplast. The N-terminal 47 residues, 33–79 (CKASNDNKDKPNDQEKTFSIDRRNMLIGLGGLYGASNVFPSNQSTLA), are a transit peptide targeting the thylakoid. Intrachain disulfides connect Cys91-Cys106 and Cys105-Cys168. Positions 167, 188, 197, 319, 323, and 353 each coordinate Cu cation. The segment at residues 171-188 (CNGAYDQVGFPDVNIQVH) is a cross-link (2'-(S-cysteinyl)-histidine (Cys-His)). The propeptide at 432–584 (RLRSKATTTT…KIEFVRDEED (153 aa)) is removed in mature form.

The protein belongs to the tyrosinase family. Cu(2+) is required as a cofactor.

It is found in the plastid. The protein resides in the chloroplast thylakoid lumen. The catalysed reaction is (+)-larreatricin + AH2 + O2 = (+)-3'-hydroxylarreatricin + A + H2O. Functionally, enantio-specific polyphenol oxidase involved in aromatic ring hydroxylation. Involved in the biosynthesis of the creosote bush 8-8' linked lignans. Has a strong preference for the 3' position of (+)-larreatricin. The chain is (+)-larreatricin hydroxylase, chloroplastic from Larrea tridentata (Creosote bush).